The sequence spans 133 residues: Fluoride-specific ion channel FluC (133 aa).

4 consecutive transmembrane segments (helical) span residues 5–25 (VPAT…LGAL), 43–63 (VATL…YVVI), 76–96 (VIMI…IESL), and 108–128 (ISYV…AIVL). 2 residues coordinate Na(+): Gly83 and Thr86.

It belongs to the fluoride channel Fluc/FEX (TC 1.A.43) family.

It is found in the cell inner membrane. The enzyme catalyses fluoride(in) = fluoride(out). Na(+) is not transported, but it plays an essential structural role and its presence is essential for fluoride channel function. Functionally, fluoride-specific ion channel. Important for reducing fluoride concentration in the cell, thus reducing its toxicity. This Saccharophagus degradans (strain 2-40 / ATCC 43961 / DSM 17024) protein is Fluoride-specific ion channel FluC.